Reading from the N-terminus, the 181-residue chain is uncharacterized protein (181 aa).

Gly residues-rich tracts occupy residues 143 to 156 and 170 to 181; these read RRGG…GPRG and GPFGPGYRGPRF. A disordered region spans residues 143 to 181; it reads RRGGRYGDFGGPRGPRGPRNDGPFGPFGPFGPGYRGPRF.

Has been detected in a cytochrome bc1-aa3 supercomplex; its deletion however leaves complex activity unaffected.

This is an uncharacterized protein from Corynebacterium glutamicum (strain ATCC 13032 / DSM 20300 / JCM 1318 / BCRC 11384 / CCUG 27702 / LMG 3730 / NBRC 12168 / NCIMB 10025 / NRRL B-2784 / 534).